We begin with the raw amino-acid sequence, 187 residues long: ADP-ribosylation factor-like protein 9 (187 aa).

Residues 25–32, 69–73, and 126–129 contribute to the GTP site; these read GLDGAGKT, EIGGS, and NKQD.

It belongs to the small GTPase superfamily. Arf family.

The sequence is that of ADP-ribosylation factor-like protein 9 (ARL9) from Homo sapiens (Human).